The following is a 178-amino-acid chain: Cytochrome b6-f complex iron-sulfur subunit (178 aa).

The helical transmembrane segment at 20-42 (LLTFGTATGVALGALYPVANYFM) threads the bilayer. Residues 65–161 (KTGWLATHQA…VDIEDDAVLV (97 aa)) enclose the Rieske domain. Residues Cys107, His109, Cys125, and His128 each contribute to the [2Fe-2S] cluster site. Residues Cys112 and Cys127 are joined by a disulfide bond.

This sequence belongs to the Rieske iron-sulfur protein family. The 4 large subunits of the cytochrome b6-f complex are cytochrome b6, subunit IV (17 kDa polypeptide, PetD), cytochrome f and the Rieske protein, while the 4 small subunits are PetG, PetL, PetM and PetN. The complex functions as a dimer. [2Fe-2S] cluster is required as a cofactor.

The protein resides in the cellular thylakoid membrane. The catalysed reaction is 2 oxidized [plastocyanin] + a plastoquinol + 2 H(+)(in) = 2 reduced [plastocyanin] + a plastoquinone + 4 H(+)(out). In terms of biological role, component of the cytochrome b6-f complex, which mediates electron transfer between photosystem II (PSII) and photosystem I (PSI), cyclic electron flow around PSI, and state transitions. The protein is Cytochrome b6-f complex iron-sulfur subunit of Prochlorococcus marinus (strain MIT 9215).